A 448-amino-acid polypeptide reads, in one-letter code: Glutamyl-tRNA reductase (448 aa).

Residues threonine 49–arginine 52, serine 109, glutamate 114–glutamine 116, and glutamine 120 each bind substrate. The active-site Nucleophile is the cysteine 50. Glycine 189–serine 194 serves as a coordination point for NADP(+).

Belongs to the glutamyl-tRNA reductase family. Homodimer.

It catalyses the reaction (S)-4-amino-5-oxopentanoate + tRNA(Glu) + NADP(+) = L-glutamyl-tRNA(Glu) + NADPH + H(+). Its pathway is porphyrin-containing compound metabolism; protoporphyrin-IX biosynthesis; 5-aminolevulinate from L-glutamyl-tRNA(Glu): step 1/2. In terms of biological role, catalyzes the NADPH-dependent reduction of glutamyl-tRNA(Glu) to glutamate 1-semialdehyde (GSA). The chain is Glutamyl-tRNA reductase from Staphylococcus aureus (strain Mu3 / ATCC 700698).